We begin with the raw amino-acid sequence, 421 residues long: ATP-dependent RNA helicase RhlB (421 aa).

The Q motif motif lies at 9-37 (QKFSDFALHPKVVEALEKKGFHNCTPIQA). Residues 40-219 (LPLTLAGRDV…FEQMNNAEYI (180 aa)) enclose the Helicase ATP-binding domain. ATP is bound at residue 53-60 (AQTGTGKT). A DEAD box motif is present at residues 165–168 (DEAD). In terms of domain architecture, Helicase C-terminal spans 245 to 390 (RLLQTLIEEE…VSKYNPDALM (146 aa)). Residues 392 to 421 (DLPKPLRLTRPRTGNGPRRTGAPRNRRRSG) are disordered. The segment covering 402–414 (PRTGNGPRRTGAP) has biased composition (low complexity).

The protein belongs to the DEAD box helicase family. RhlB subfamily. Component of the RNA degradosome, which is a multiprotein complex involved in RNA processing and mRNA degradation.

It is found in the cytoplasm. The enzyme catalyses ATP + H2O = ADP + phosphate + H(+). Its function is as follows. DEAD-box RNA helicase involved in RNA degradation. Has RNA-dependent ATPase activity and unwinds double-stranded RNA. This chain is ATP-dependent RNA helicase RhlB, found in Escherichia coli O157:H7 (strain EC4115 / EHEC).